A 408-amino-acid chain; its full sequence is Menaquinone reductase (408 aa).

FAD is bound by residues 13–17, 46–49, Arg103, Ala127, Asp290, and 302–303; these read GAGPA, CGDG, and GI.

It belongs to the geranylgeranyl reductase family. FAD serves as cofactor.

It carries out the reaction menaquinone-9 + AH2 = beta-dihydromenaquinone-9 + A. It participates in quinol/quinone metabolism; menaquinone biosynthesis. Functionally, catalyzes the reduction of a single double bond in the isoprenoid tail of menaquinone (MK-9) in M.tuberculosis, likely the beta-isoprene unit, forming the predominant form of menaquinone found in mycobacteria, MK-9(II-H2). In Mycobacterium tuberculosis (strain CDC 1551 / Oshkosh), this protein is Menaquinone reductase.